The primary structure comprises 612 residues: Zinc metalloproteinase nas-36 (612 aa).

The signal sequence occupies residues 1–16; it reads MLLLVLLFVFISATNA. Residue asparagine 15 is glycosylated (N-linked (GlcNAc...) asparagine). The propeptide occupies 17-122; the sequence is SDVGRRELEK…KSKPNVRGRR (106 aa). In terms of domain architecture, Peptidase M12A spans 123–320; that stretch reads SFDASPESKW…IETINKAYCS (198 aa). N-linked (GlcNAc...) asparagine glycosylation is present at asparagine 163. Cystine bridges form between cysteine 166-cysteine 319, cysteine 190-cysteine 209, cysteine 329-cysteine 343, cysteine 345-cysteine 354, cysteine 365-cysteine 394, cysteine 515-cysteine 546, cysteine 519-cysteine 551, and cysteine 531-cysteine 536. Residue histidine 217 participates in Zn(2+) binding. Glutamate 218 is a catalytic residue. Zn(2+)-binding residues include histidine 221 and histidine 227. An EGF-like domain is found at 320 to 355; the sequence is SDRCSGSNDCKNGGYPHPKQCDTCLCPNGLSGPKCE. The CUB domain occupies 365–478; that stretch reads CGGKIVVKEE…VGFKLQARAT (114 aa). Residues 503–552 form the TSP type-1 domain; it reads TDQWAEWGSWSQCSRSCGGCGIMSRVRVCRTKQCKGRRQEFSTCNLKACP.

Zn(2+) is required as a cofactor.

It localises to the secreted. With respect to regulation, inhibited by 1,10-phenanthroline. Functionally, metalloprotease. Involved in molting, a process during larval stages in which a new cuticle is formed and the old cuticle is shed. This Haemonchus contortus (Barber pole worm) protein is Zinc metalloproteinase nas-36.